The primary structure comprises 462 residues: C4-dicarboxylate transport transcriptional regulatory protein DctD (462 aa).

Positions 12 to 126 constitute a Response regulatory domain; sequence QVLLIDDDPH…ALLDSVRRAL (115 aa). Asp61 is subject to 4-aspartylphosphate. A Sigma-54 factor interaction domain is found at 152-381; it reads LIGRSAGMQR…LQNAAERFAL (230 aa). ATP-binding positions include 180-187 and 243-252; these read GETGAGKE and ANGGTLFLDE.

Post-translationally, phosphorylated by DctB.

Functionally, member of the two-component regulatory system DctB/DctD, which regulates C4-dicarboxylate transport via regulation of expression of the dctPQM operon and dctA. The sequence is that of C4-dicarboxylate transport transcriptional regulatory protein DctD from Pseudomonas aeruginosa (strain ATCC 15692 / DSM 22644 / CIP 104116 / JCM 14847 / LMG 12228 / 1C / PRS 101 / PAO1).